Here is a 254-residue protein sequence, read N- to C-terminus: Segregation and condensation protein A (254 aa).

It belongs to the ScpA family. As to quaternary structure, component of a cohesin-like complex composed of ScpA, ScpB and the Smc homodimer, in which ScpA and ScpB bind to the head domain of Smc. The presence of the three proteins is required for the association of the complex with DNA.

It localises to the cytoplasm. Its function is as follows. Participates in chromosomal partition during cell division. May act via the formation of a condensin-like complex containing Smc and ScpB that pull DNA away from mid-cell into both cell halves. The polypeptide is Segregation and condensation protein A (Clostridium tetani (strain Massachusetts / E88)).